Reading from the N-terminus, the 525-residue chain is Glucose-6-phosphate isomerase (525 aa).

Glutamate 356 (proton donor) is an active-site residue. Residues histidine 387 and lysine 502 contribute to the active site.

The protein belongs to the GPI family.

It localises to the cytoplasm. It catalyses the reaction alpha-D-glucose 6-phosphate = beta-D-fructose 6-phosphate. The protein operates within carbohydrate biosynthesis; gluconeogenesis. It participates in carbohydrate degradation; glycolysis; D-glyceraldehyde 3-phosphate and glycerone phosphate from D-glucose: step 2/4. Functionally, catalyzes the reversible isomerization of glucose-6-phosphate to fructose-6-phosphate. The polypeptide is Glucose-6-phosphate isomerase (Treponema denticola (strain ATCC 35405 / DSM 14222 / CIP 103919 / JCM 8153 / KCTC 15104)).